The chain runs to 639 residues: Extracellular metalloproteinase 1 (639 aa).

The signal sequence occupies residues 1–19 (MHGLLLAAGLISLPLHVLA). Positions 20–250 (HPQPSSTSLA…VHNVVDYVAH (231 aa)) are excised as a propeptide. A glycan (N-linked (GlcNAc...) asparagine) is linked at asparagine 291. Histidine 434 is a binding site for Zn(2+). Glutamate 435 is an active-site residue. Histidine 438 serves as a coordination point for Zn(2+). Asparagine 598 carries N-linked (GlcNAc...) asparagine glycosylation.

This sequence belongs to the peptidase M36 family. Requires Zn(2+) as cofactor.

The protein localises to the secreted. Functionally, secreted metalloproteinase probably acting as a virulence factor. The protein is Extracellular metalloproteinase 1 (MEP1) of Arthroderma otae (strain ATCC MYA-4605 / CBS 113480) (Microsporum canis).